Here is a 74-residue protein sequence, read N- to C-terminus: Acyl carrier protein (74 aa).

The region spanning 1–73 (MAVFEKVQEI…DLVAYVEEKS (73 aa)) is the Carrier domain. O-(pantetheine 4'-phosphoryl)serine is present on Ser-35.

The protein belongs to the acyl carrier protein (ACP) family. 4'-phosphopantetheine is transferred from CoA to a specific serine of apo-ACP by AcpS. This modification is essential for activity because fatty acids are bound in thioester linkage to the sulfhydryl of the prosthetic group.

The protein resides in the cytoplasm. Its pathway is lipid metabolism; fatty acid biosynthesis. Carrier of the growing fatty acid chain in fatty acid biosynthesis. The sequence is that of Acyl carrier protein from Streptococcus pyogenes serotype M1.